The following is a 582-amino-acid chain: Ubiquilin-1 (582 aa).

Disordered stretches follow at residues 1 to 26 and 102 to 136; these read MAES…AEPK and RPQD…AANS. Ala-2 bears the N-acetylalanine mark. A Ubiquitin-like domain is found at 28 to 102; the sequence is MKVTVKTPKE…VHLVIKTQNR (75 aa). A compositionally biased stretch (polar residues) spans 102–135; it reads RPQDNSAQQTNTTGNSVTSSPAPDSNPTSGPAAN. The interaction with UBXN4 stretch occupies residues 169-422; it reads QLLSNPEMMV…LNNPLFAGNP (254 aa). 2 consecutive STI1 domains span residues 173–201 and 203–242; these read NPEM…QLIM and NPQM…MQEM. The interval 285-365 is disordered; that stretch reads NPFASLVSSP…NLVPGAGASM (81 aa). Residues 290 to 304 show a composition bias toward polar residues; the sequence is LVSSPSSAEGTQPSR. Over residues 318 to 346 the composition is skewed to low complexity; it reads QTPQSSPASGSTGSTTNTVSTSAGNATST. STI1 domains lie at 381–428 and 432–464; these read NPQL…QEQM and LPTF…QQGL. The tract at residues 481–513 is disordered; that stretch reads GLAAGNSGGPAGTTAPSTAPGEDTNPQGGAAEP. The region spanning 539–579 is the UBA domain; that stretch reads RFQQQLEQLSAMGFLNREANLQALIATGGDINAAIERLLGS.

In terms of assembly, monomer and homodimer. Heterodimer with UBQLN2. Binds CD47. Binds NBL1. Binds GABRA1, GABRA2, GABRA3, GABRA6, GABRB1, GABRB2 and GABRB3. Binds UBE3A, BTRC, P4HB and MTOR. Interacts with the proteasome 19S subunit. Interacts (via ubiquitin-like domain) with TREX1; the interaction is direct and may control TREX1 subcellular location. Forms a complex with UBXN4 and VCP. Interacts (via UBA domain) with UBQLN4 (via ubiquitin-like domain). Found in a complex with UBQLN2 and MAP1LC3A/B/C. The monomeric form interacts with PSEN1 and PSEN2. Interacts with ORAI1. Interacts (via UBA domain) with TICAM1. Interacts with EPS15. Interacts (via UBA domain) with UBA52 and (via ubiquitin-like domain) with PSMD3 and PSMD4. Interacts with HERPUD1. Interacts with MAP1LC3A/B/C in the presence of UBQLN4. Interacts (via ubiquitin-like domain) with EPS15 (via UIM domains) and both the ubiquitinated and non-ubiquitinated forms can interact with EPS15. Interacts (via ubiquitin-like domain) with EPS15L1, HGS (via UIM domain) and STAM2 (via UIM domain). Interacts with BCL2L10/BCL-B; in the cytoplasm. Post-translationally, degraded during both macroautophagy and during chaperone-mediated autophagy (CMA). In terms of processing, phosphorylated. Ubiquitinated.

It is found in the nucleus. The protein localises to the cytoplasm. It localises to the endoplasmic reticulum. Its subcellular location is the cytoplasmic vesicle. The protein resides in the autophagosome. It is found in the cell membrane. In terms of biological role, plays an important role in the regulation of different protein degradation mechanisms and pathways including ubiquitin-proteasome system (UPS), autophagy and endoplasmic reticulum-associated protein degradation (ERAD) pathway. Mediates the proteasomal targeting of misfolded or accumulated proteins for degradation by binding (via UBA domain) to their polyubiquitin chains and by interacting (via ubiquitin-like domain) with the subunits of the proteasome. Plays a role in the ERAD pathway via its interaction with ER-localized proteins UBXN4, VCP and HERPUD1 and may form a link between the polyubiquitinated ERAD substrates and the proteasome. Plays a role in unfolded protein response (UPR) by attenuating the induction of UPR-inducible genes, DDTI3/CHOP, HSPA5 and PDIA2 during ER stress. Involved in the regulation of macroautophagy and autophagosome formation; required for maturation of autophagy-related protein LC3 from the cytosolic form LC3-I to the membrane-bound form LC3-II and may assist in the maturation of autophagosomes to autolysosomes by mediating autophagosome-lysosome fusion. Negatively regulates the TICAM1/TRIF-dependent toll-like receptor signaling pathway by decreasing the abundance of TICAM1 via the autophagic pathway. Promotes the ubiquitination and lysosomal degradation of ORAI1, consequently down-regulating the ORAI1-mediated Ca2+ mobilization. Suppresses the maturation and proteasomal degradation of amyloid beta A4 protein (A4) by stimulating the lysine 63 (K63)-linked polyubiquitination. Delays the maturation of A4 by sequestering it in the Golgi apparatus and preventing its transport to the cell surface for subsequent processing. Promotes the surface expression of GABA-A receptors. Ubiquitinates BCL2L10 and thereby stabilizes protein abundance. This is Ubiquilin-1 (Ubqln1) from Rattus norvegicus (Rat).